A 386-amino-acid polypeptide reads, in one-letter code: Methylthioribose-1-phosphate isomerase (386 aa).

D258 functions as the Proton donor in the catalytic mechanism.

The protein belongs to the eIF-2B alpha/beta/delta subunits family. MtnA subfamily.

The protein localises to the cytoplasm. It is found in the nucleus. It carries out the reaction 5-(methylsulfanyl)-alpha-D-ribose 1-phosphate = 5-(methylsulfanyl)-D-ribulose 1-phosphate. It functions in the pathway amino-acid biosynthesis; L-methionine biosynthesis via salvage pathway; L-methionine from S-methyl-5-thio-alpha-D-ribose 1-phosphate: step 1/6. Its function is as follows. Catalyzes the interconversion of methylthioribose-1-phosphate (MTR-1-P) into methylthioribulose-1-phosphate (MTRu-1-P). This chain is Methylthioribose-1-phosphate isomerase, found in Postia placenta (strain ATCC 44394 / Madison 698-R) (Brown rot fungus).